The following is a 215-amino-acid chain: Probable nicotinate-nucleotide adenylyltransferase (215 aa).

It belongs to the NadD family.

It catalyses the reaction nicotinate beta-D-ribonucleotide + ATP + H(+) = deamido-NAD(+) + diphosphate. The protein operates within cofactor biosynthesis; NAD(+) biosynthesis; deamido-NAD(+) from nicotinate D-ribonucleotide: step 1/1. Its function is as follows. Catalyzes the reversible adenylation of nicotinate mononucleotide (NaMN) to nicotinic acid adenine dinucleotide (NaAD). The chain is Probable nicotinate-nucleotide adenylyltransferase from Fervidobacterium nodosum (strain ATCC 35602 / DSM 5306 / Rt17-B1).